Consider the following 879-residue polypeptide: Protein P (879 aa).

The tract at residues 1-184 (MHPFSRLFRN…GKPYSWEHRQ (184 aa)) is terminal protein domain (TP). Residues 185 to 382 (LVQHNGQQHK…YCIHHIVSSI (198 aa)) are spacer. The disordered stretch occupies residues 304–345 (SASNSNKSRSREKAYSSNSTSKRYSPPLNYEKSDFSSPGVRG). The interval 383-724 (DDWGPCTVTG…YEELWPVVRQ (342 aa)) is polymerase/reverse transcriptase domain (RT). The Reverse transcriptase domain occupies 393 to 634 (DVTIKSPRTP…NHLHFMGYVI (242 aa)). 3 residues coordinate Mg(2+): D465, D585, and D586.

The protein belongs to the hepadnaviridae P protein family.

The enzyme catalyses DNA(n) + a 2'-deoxyribonucleoside 5'-triphosphate = DNA(n+1) + diphosphate. It carries out the reaction Endonucleolytic cleavage to 5'-phosphomonoester.. Its activity is regulated as follows. Activated by host HSP70 and HSP40 in vitro to be able to bind the epsilon loop of the pgRNA. Because deletion of the RNase H region renders the protein partly chaperone-independent, the chaperones may be needed indirectly to relieve occlusion of the RNA-binding site by this domain. Inhibited by several reverse-transcriptase inhibitors: Lamivudine, Adefovir and Entecavir. Multifunctional enzyme that converts the viral RNA genome into dsDNA in viral cytoplasmic capsids. This enzyme displays a DNA polymerase activity that can copy either DNA or RNA templates, and a ribonuclease H (RNase H) activity that cleaves the RNA strand of RNA-DNA heteroduplexes in a partially processive 3'- to 5'-endonucleasic mode. Neo-synthesized pregenomic RNA (pgRNA) are encapsidated together with the P protein, and reverse-transcribed inside the nucleocapsid. Initiation of reverse-transcription occurs first by binding the epsilon loop on the pgRNA genome, and is initiated by protein priming, thereby the 5'-end of (-)DNA is covalently linked to P protein. Partial (+)DNA is synthesized from the (-)DNA template and generates the relaxed circular DNA (RC-DNA) genome. After budding and infection, the RC-DNA migrates in the nucleus, and is converted into a plasmid-like covalently closed circular DNA (cccDNA). The activity of P protein does not seem to be necessary for cccDNA generation, and is presumably released from (+)DNA by host nuclear DNA repair machinery. The protein is Protein P of Woodchuck hepatitis B virus (isolate 1) (WHV).